The following is a 126-amino-acid chain: Large ribosomal subunit protein bL12 (126 aa).

The protein belongs to the bacterial ribosomal protein bL12 family. As to quaternary structure, homodimer. Part of the ribosomal stalk of the 50S ribosomal subunit. Forms a multimeric L10(L12)X complex, where L10 forms an elongated spine to which 2 to 4 L12 dimers bind in a sequential fashion. Binds GTP-bound translation factors.

Forms part of the ribosomal stalk which helps the ribosome interact with GTP-bound translation factors. Is thus essential for accurate translation. The protein is Large ribosomal subunit protein bL12 of Paracidovorax citrulli (strain AAC00-1) (Acidovorax citrulli).